The primary structure comprises 210 residues: MKGRFFSFEGPDGAGKTTMITKLESFLREKGFDVLLTREPGGVRIAEEIRSIILNPKHTEMDGRTEALLYAAARRQHLLEKIIPAIKAGKIVLCDRFVDSSLAYQGFARGLGIDEILQINQFAIDGFFPSLTIYFDIDPKIGLERIQKNKQREINRLDMESLSFHYKVREGYLKIAERFSDRIIVIDASKPVDEVFAMTIAAVMDQIEGR.

Position 10–17 (10–17 (GPDGAGKT)) interacts with ATP.

This sequence belongs to the thymidylate kinase family.

It carries out the reaction dTMP + ATP = dTDP + ADP. Its function is as follows. Phosphorylation of dTMP to form dTDP in both de novo and salvage pathways of dTTP synthesis. The sequence is that of Thymidylate kinase from Geobacillus sp. (strain WCH70).